The sequence spans 328 residues: Eukaryotic translation initiation factor 3 subunit I (328 aa).

WD repeat units lie at residues 8-49, 50-89, 145-184, 189-228, and 286-327; these read GHER…GTYE, GHTGAIWTCDINKSSTLMVSGAADNTMRLWDVKTGKQLYK, TRESKATVAGWSYLSKFLFTGHEDGSVSRYDAITGEFVES, NSGSTITDLQFYPDRTYFITSCKDTTAKAIDVDSFEVIKT, and GHFG…FKYT.

The protein belongs to the eIF-3 subunit I family. In terms of assembly, component of the eukaryotic translation initiation factor 3 (eIF-3) complex. The eIF-3 complex appears to include tif32/eif3a, SPAC25G10.08/eif3b, tif33/eif3c, SPBC4C3.07/eif3f, tif35/eif3g and sum1/eif3i. This set of common subunits may also associate exclusively with either moe1/eif3d and int6/eif3e, or with SPAC821.05/eif3h and SPAC1751.03/eif3m. The eIF-3 complex may also include SPAC3A12.13c/eif3j.

Its subcellular location is the cytoplasm. The protein resides in the nucleus. Its function is as follows. Component of the eukaryotic translation initiation factor 3 (eIF-3) complex, which is involved in protein synthesis of a specialized repertoire of mRNAs and, together with other initiation factors, stimulates binding of mRNA and methionyl-tRNAi to the 40S ribosome. The eIF-3 complex specifically targets and initiates translation of a subset of mRNAs involved in cell proliferation. In Schizosaccharomyces pombe (strain 972 / ATCC 24843) (Fission yeast), this protein is Eukaryotic translation initiation factor 3 subunit I (sum1).